A 74-amino-acid chain; its full sequence is Acyl carrier protein (74 aa).

The region spanning 1–73 (MAVFEKVQEI…DLVAYVEEKS (73 aa)) is the Carrier domain. Ser-35 carries the post-translational modification O-(pantetheine 4'-phosphoryl)serine.

This sequence belongs to the acyl carrier protein (ACP) family. 4'-phosphopantetheine is transferred from CoA to a specific serine of apo-ACP by AcpS. This modification is essential for activity because fatty acids are bound in thioester linkage to the sulfhydryl of the prosthetic group.

The protein localises to the cytoplasm. It functions in the pathway lipid metabolism; fatty acid biosynthesis. Functionally, carrier of the growing fatty acid chain in fatty acid biosynthesis. The protein is Acyl carrier protein of Streptococcus pyogenes serotype M1.